Here is a 533-residue protein sequence, read N- to C-terminus: Beta-glucosidase 24 (533 aa).

Positions M1–A26 are cleaved as a signal peptide. Q58 provides a ligand contact to a beta-D-glucoside. Residues N64 and N88 are each glycosylated (N-linked (GlcNAc...) asparagine). A beta-D-glucoside contacts are provided by residues H161 and N206 to E207. The Proton donor role is filled by E207. C226 and C239 are joined by a disulfide. Position 355 (Y355) interacts with a beta-D-glucoside. N-linked (GlcNAc...) asparagine glycosylation occurs at N388. E427 contacts a beta-D-glucoside. E427 acts as the Nucleophile in catalysis. N-linked (GlcNAc...) asparagine glycans are attached at residues N437, N442, and N470. A beta-D-glucoside is bound by residues W477, E484–W485, and F493. N503 carries an N-linked (GlcNAc...) asparagine glycan. The Prevents secretion from ER motif lies at K530–L533.

Belongs to the glycosyl hydrolase 1 family.

The protein localises to the endoplasmic reticulum lumen. The enzyme catalyses Hydrolysis of terminal, non-reducing beta-D-glucosyl residues with release of beta-D-glucose.. In Arabidopsis thaliana (Mouse-ear cress), this protein is Beta-glucosidase 24.